The following is a 144-amino-acid chain: Large ribosomal subunit protein uL11m (144 aa).

Residues 1–32 constitute a mitochondrion transit peptide; sequence MASTRTTIIKLIVPAGKATPTPPIGPALGARG.

Belongs to the universal ribosomal protein uL11 family. Component of the mitochondrial large ribosomal subunit (mt-LSU). Mature yeast 74S mitochondrial ribosomes consist of a small (37S) and a large (54S) subunit. The 37S small subunit contains a 15S ribosomal RNA (15S mt-rRNA) and at least 32 different proteins. The 54S large subunit contains a 21S rRNA (21S mt-rRNA) and at least 45 different proteins.

The protein localises to the mitochondrion. It is found in the cytoplasm. Its function is as follows. Component of the mitochondrial ribosome (mitoribosome), a dedicated translation machinery responsible for the synthesis of mitochondrial genome-encoded proteins, including at least some of the essential transmembrane subunits of the mitochondrial respiratory chain. The mitoribosomes are attached to the mitochondrial inner membrane and translation products are cotranslationally integrated into the membrane. In Schizosaccharomyces pombe (strain 972 / ATCC 24843) (Fission yeast), this protein is Large ribosomal subunit protein uL11m.